Consider the following 677-residue polypeptide: Glutamine--fructose-6-phosphate aminotransferase [isomerizing] 1 (677 aa).

C2 (nucleophile) is an active-site residue. The 268-residue stretch at 2–269 folds into the Glutamine amidotransferase type-2 domain; that stretch reads CGIFAYLNFH…DGEVVNLKDG (268 aa). SIS domains lie at 353-492 and 524-667; these read HLKT…DTIS and LAQL…VDQP. Residues 370 to 371, 415 to 417, T420, and H571 contribute to the substrate site; these read TS and SQS.

In terms of assembly, homotetramer, may also exist as homodimers. In terms of tissue distribution, highly expressed in flowers specifically in mature anthers, mature pollen grains and pollen tubes. Barely observed in roots, leaves and stems.

It catalyses the reaction D-fructose 6-phosphate + L-glutamine = D-glucosamine 6-phosphate + L-glutamate. It participates in nucleotide-sugar biosynthesis; UDP-N-acetyl-alpha-D-glucosamine biosynthesis; alpha-D-glucosamine 6-phosphate from D-fructose 6-phosphate: step 1/1. Controls the flux of glucose into the hexosamine biosynthetic pathway (HBP) leading to glucosamine (GlcN) content homeostasis. Involved in regulating the availability of precursors for N- and O-linked glycosylation of proteins. Required during pollen maturation and pollen tube formation by triggering polar deposition of pectin and callose in the pollen cell wall. Promotes tolerance to tunicamycin (Tm), an inhibitor of proteins N-glycosylation in endoplasmic reticulum (ER). This chain is Glutamine--fructose-6-phosphate aminotransferase [isomerizing] 1, found in Arabidopsis thaliana (Mouse-ear cress).